Consider the following 201-residue polypeptide: 3-isopropylmalate dehydratase small subunit (201 aa).

The protein belongs to the LeuD family. LeuD type 1 subfamily. Heterodimer of LeuC and LeuD.

It catalyses the reaction (2R,3S)-3-isopropylmalate = (2S)-2-isopropylmalate. It functions in the pathway amino-acid biosynthesis; L-leucine biosynthesis; L-leucine from 3-methyl-2-oxobutanoate: step 2/4. In terms of biological role, catalyzes the isomerization between 2-isopropylmalate and 3-isopropylmalate, via the formation of 2-isopropylmaleate. This is 3-isopropylmalate dehydratase small subunit from Salmonella arizonae (strain ATCC BAA-731 / CDC346-86 / RSK2980).